The chain runs to 71 residues: uncharacterized protein (71 aa).

Residues 52–71 are disordered; it reads KEKFERKEDEKSKPKGVRED.

This is an uncharacterized protein from Archaeoglobus fulgidus (strain ATCC 49558 / DSM 4304 / JCM 9628 / NBRC 100126 / VC-16).